Here is a 47-residue protein sequence, read N- to C-terminus: Defensin-2 (47 aa).

Cystine bridges form between Cys-3-Cys-47, Cys-14-Cys-35, Cys-20-Cys-41, and Cys-24-Cys-43.

This sequence belongs to the DEFL family. Epidermis and vascular bundles of pods, stems, roots, leaves and wet or dry seeds.

Its function is as follows. Possesses antifungal activity sensitive to inorganic cations. The sequence is that of Defensin-2 from Pisum sativum (Garden pea).